A 660-amino-acid chain; its full sequence is MPSKTSSRFANINPNVFVSTIMIIAIFLAIVILAPDAFELLTQQLKNWITESFSWFYVLSVAFFLIVLGYIACSSSGKIKLGPDHSQPDYSNSSWFAMLFTAGMGIGLMFFGIAEPIMHYVSPPSGEPETILAAQQSMRVTFFHWGLHAWGIYAIVALSLSYFAYRHDLPLKIRSSLYPLIGKKIYGPMGDAVDTFATIGTIFGVATTLGFGVTQISSGLNYLFGFEPTSFSKVVLIIIVSAMAALSVGLGLDKGVKRLAELNLVLAVTLLAFVFFTSATVYLLQTTIQNTGQYISNLFEMTFNLYAYQPNGWIGGWTIMYWAWWISWSPFVGMFIARVSRGRTIREFIIGVMLIPTGFTLIWMGFMGNAGLYSILHDGNLSLLNAVQRDSSVALFEFLHSLPFSGVMSLLATVLVVLFFVTSADSGALVVDYLTAKSEDSPVWQRLFWIVVMAGLAIILLLAGGLTALQSATIMSALPFTFIMLLICWGLIKALRIDSTKMQAIQEARTTPRAIQNPRSWQQRLGLIMHYPHSKVEVDAYIKKHVQRAFESLEREFKRRHLTVAISETDDGLQLKVDHHDEINFIYHVVSRETMPPSFMLEQEHNADVEKYFQAEVFLREGGQNYDVMDWTEEDLIQDIIDQYERHLYFLSVMRAQTGN.

Topologically, residues 1–13 (MPSKTSSRFANIN) are cytoplasmic. Residues 14 to 34 (PNVFVSTIMIIAIFLAIVILA) form a helical membrane-spanning segment. Residues 35–52 (PDAFELLTQQLKNWITES) lie on the Periplasmic side of the membrane. Residues 53–73 (FSWFYVLSVAFFLIVLGYIAC) form a helical membrane-spanning segment. Residues 74–93 (SSSGKIKLGPDHSQPDYSNS) lie on the Cytoplasmic side of the membrane. Residues 94–114 (SWFAMLFTAGMGIGLMFFGIA) traverse the membrane as a helical segment. The Periplasmic portion of the chain corresponds to 115 to 139 (EPIMHYVSPPSGEPETILAAQQSMR). A helical membrane pass occupies residues 140–160 (VTFFHWGLHAWGIYAIVALSL). Residues 161-195 (SYFAYRHDLPLKIRSSLYPLIGKKIYGPMGDAVDT) are Cytoplasmic-facing. The chain crosses the membrane as a helical span at residues 196-216 (FATIGTIFGVATTLGFGVTQI). The Periplasmic segment spans residues 217 to 230 (SSGLNYLFGFEPTS). Residues 231-251 (FSKVVLIIIVSAMAALSVGLG) traverse the membrane as a helical segment. Residues 252–263 (LDKGVKRLAELN) are Cytoplasmic-facing. The chain crosses the membrane as a helical span at residues 264 to 284 (LVLAVTLLAFVFFTSATVYLL). Over 285 to 316 (QTTIQNTGQYISNLFEMTFNLYAYQPNGWIGG) the chain is Periplasmic. A helical membrane pass occupies residues 317 to 337 (WTIMYWAWWISWSPFVGMFIA). Residues 338 to 347 (RVSRGRTIRE) lie on the Cytoplasmic side of the membrane. A helical transmembrane segment spans residues 348–368 (FIIGVMLIPTGFTLIWMGFMG). At 369–401 (NAGLYSILHDGNLSLLNAVQRDSSVALFEFLHS) the chain is on the periplasmic side. The helical transmembrane segment at 402 to 422 (LPFSGVMSLLATVLVVLFFVT) threads the bilayer. The Cytoplasmic segment spans residues 423–446 (SADSGALVVDYLTAKSEDSPVWQR). The helical transmembrane segment at 447 to 467 (LFWIVVMAGLAIILLLAGGLT) threads the bilayer. Residues 468-471 (ALQS) are Periplasmic-facing. The helical transmembrane segment at 472 to 492 (ATIMSALPFTFIMLLICWGLI) threads the bilayer. Over 493-660 (KALRIDSTKM…LSVMRAQTGN (168 aa)) the chain is Cytoplasmic.

The protein belongs to the BCCT transporter (TC 2.A.15) family.

It localises to the cell inner membrane. With respect to regulation, uptake is activated by NaCl, KCl or mannose gradients across the cell membrane. Inhibited by the protonophore 3,3',4',5-tetrachlorosalicylanilide (TCS). Its function is as follows. Energy-dependent uptake of glycine betaine in response to high salinity. The protein is Glycine betaine transporter of Acinetobacter baylyi (strain ATCC 33305 / BD413 / ADP1).